The chain runs to 314 residues: uncharacterized protein (314 aa).

2 helical membrane-spanning segments follow: residues 23 to 43 (LALG…MALF) and 98 to 118 (MASG…GPLT). Over residues 165–184 (GLGSGAGGGDVGGGGAGGTT) the composition is skewed to gly residues. Residues 165-314 (GLGSGAGGGD…APDEKTDAGE (150 aa)) form a disordered region. Positions 190–202 (GPPPVPTSSPPTT) are enriched in pro residues. 2 stretches are compositionally biased toward low complexity: residues 203–212 (PAGAPTKSAT) and 219–232 (ASPA…AGMP). The helical transmembrane segment at 221–241 (PASAHMGAAGMPMVPPGAMGA) threads the bilayer. The span at 294 to 314 (LLPEHKDFGRIAPDEKTDAGE) shows a compositional bias: basic and acidic residues.

The protein localises to the cell membrane. This is an uncharacterized protein from Mycobacterium tuberculosis (strain CDC 1551 / Oshkosh).